The sequence spans 401 residues: MKTLKDLGDLKGKRVLVRADFNVPLDGTTITDDGRIKAALPTIKALREQGAKVILMAHLGRPKGKVVPELSLAPVAARLGELLGITVPLAADTYGEDAQAKVAAMSDGDVVLLQNVRFNPEETSKDPEERAAYAKKIAALGEVFVSDGFGVVHRAQGSNYDVAADLPAAAGLLVEKEVKALSRATVNPERPLTVVLGGSKVSDKLGVIDNLLDKANRLVIGGGMAYTFLKAKGYEVGTSLLEEDQIETVKGYMERAEKNGVELVLPTDVVINPVFPKSDEDIAPEVVAADAIPADKMGLDIGPESQKLFHDKIVDSKTVVWNGPMGVFEVPTFAEGTKAVAQALVDATAAGAFTIVGGGDSASAVRNLGFPEDGFSHISTGGGASLEFLEGKELPGLKVLD.

Substrate contacts are provided by residues 20–22 (DFN), arginine 35, 58–61 (HLGR), arginine 117, and arginine 154. Residues lysine 204, glycine 298, glutamate 329, and 358–361 (GGDS) each bind ATP.

Belongs to the phosphoglycerate kinase family. In terms of assembly, monomer.

The protein localises to the cytoplasm. The enzyme catalyses (2R)-3-phosphoglycerate + ATP = (2R)-3-phospho-glyceroyl phosphate + ADP. Its pathway is carbohydrate degradation; glycolysis; pyruvate from D-glyceraldehyde 3-phosphate: step 2/5. The chain is Phosphoglycerate kinase from Bifidobacterium adolescentis (strain ATCC 15703 / DSM 20083 / NCTC 11814 / E194a).